The chain runs to 496 residues: NADP-dependent glyceraldehyde-3-phosphate dehydrogenase (496 aa).

Residues Arg116 and 169–170 (NY) each bind substrate. The NADP(+) site is built by Lys192, Thr195, and Asp230. NAD(+) is bound at residue 245 to 249 (GGDTG). The active-site Proton acceptor is the Glu264. 297–299 (RCT) lines the substrate pocket. Cys298 (nucleophile) is an active-site residue. Glu391 is a binding site for NADP(+). At Ser404 the chain carries Phosphoserine. Arg451 lines the substrate pocket.

This sequence belongs to the aldehyde dehydrogenase family. In terms of assembly, interacts with 14-3-3 protein when phosphorylated. This interaction is released by divalent cations. Post-translationally, phosphorylated in shoots and non-photosynthetic tissues, but not in leaves.

The protein localises to the cytoplasm. It carries out the reaction D-glyceraldehyde 3-phosphate + NADP(+) + H2O = (2R)-3-phosphoglycerate + NADPH + 2 H(+). With respect to regulation, insensitive to magnesium or calcium when dephosphorylated. When phosphorylated, 3-fold activation by magnesium or calcium, 2-fold activation by potassium, inhibited by ADP and AMP and insensitive to ATP or PPi. In terms of biological role, important as a means of generating NADPH for biosynthetic reactions. In Triticum aestivum (Wheat), this protein is NADP-dependent glyceraldehyde-3-phosphate dehydrogenase (GAPN).